A 123-amino-acid polypeptide reads, in one-letter code: Small ribosomal subunit protein uS13 (123 aa).

The protein belongs to the universal ribosomal protein uS13 family. Part of the 30S ribosomal subunit. Forms a loose heterodimer with protein S19. Forms two bridges to the 50S subunit in the 70S ribosome.

Its function is as follows. Located at the top of the head of the 30S subunit, it contacts several helices of the 16S rRNA. In the 70S ribosome it contacts the 23S rRNA (bridge B1a) and protein L5 of the 50S subunit (bridge B1b), connecting the 2 subunits; these bridges are implicated in subunit movement. Contacts the tRNAs in the A and P-sites. This chain is Small ribosomal subunit protein uS13, found in Neorickettsia sennetsu (strain ATCC VR-367 / Miyayama) (Ehrlichia sennetsu).